The sequence spans 176 residues: uncharacterized protein (176 aa).

Positions 15 to 28 (TSSNPPASASQSTG) are enriched in polar residues. 2 disordered regions span residues 15–100 (TSSN…TSAG) and 125–176 (ASLR…NLGA). Residues 43-52 (FIDKVTDKPS) show a composition bias toward basic and acidic residues.

This is an uncharacterized protein from Homo sapiens (Human).